A 374-amino-acid chain; its full sequence is 3-isopropylmalate dehydrogenase (374 aa).

83-96 is a binding site for NAD(+); the sequence is GPKWDNLPPEIRPE. Residues R104, R114, R142, and D231 each contribute to the substrate site. 3 residues coordinate Mg(2+): D231, D255, and D259. Position 288–300 (288–300) interacts with NAD(+); it reads GSAPDIAGQNKAN.

It belongs to the isocitrate and isopropylmalate dehydrogenases family. LeuB type 1 subfamily. Homodimer. Requires Mg(2+) as cofactor. Mn(2+) serves as cofactor.

It is found in the cytoplasm. The catalysed reaction is (2R,3S)-3-isopropylmalate + NAD(+) = 4-methyl-2-oxopentanoate + CO2 + NADH. The protein operates within amino-acid biosynthesis; L-leucine biosynthesis; L-leucine from 3-methyl-2-oxobutanoate: step 3/4. In terms of biological role, catalyzes the oxidation of 3-carboxy-2-hydroxy-4-methylpentanoate (3-isopropylmalate) to 3-carboxy-4-methyl-2-oxopentanoate. The product decarboxylates to 4-methyl-2 oxopentanoate. This chain is 3-isopropylmalate dehydrogenase, found in Carboxydothermus hydrogenoformans (strain ATCC BAA-161 / DSM 6008 / Z-2901).